The sequence spans 166 residues: uncharacterized protein (166 aa).

The protein to C.perfringens pCP13 PCP12.

This is an uncharacterized protein from Clostridium perfringens.